Here is a 558-residue protein sequence, read N- to C-terminus: MRKIRANAIAILTVAWILGTFYYLWQDNRAHAASSGGRGAQRAGRRSEQLREDRTIPLIVTGTPSKGFDEKAYLSAKQLKAGEDPYRQHAFNQLESDKLSPDRPIRDTRHYSCPSVSYSSDLPATSVIITFHNEARSTLLRTVKSVLNRTPANLIQEIILVDDFSSDPEDCLLLTRIPKVKCLRNDRREGLIRSRVRGADVAAATVLTFLDSHCEVNTEWLPPMLQRVKEDHTRVVSPIIDVISLDNFAYLAASADLRGGFDWSLHFKWEQIPLEQKMTRTDPTRPIRTPVIAGGIFVIDKSWFNHLGKYDAQMDIWGGENFELSFRVWMCGGSLEIVPCSRVGHVFRKRHPYNFPEGNALTYIRNTKRTAEVWMDEYKQYYYEARPSAIGKAFGSVATRIEQRKKMNCKSFRWYLENVYPELTVPVKEALPGIIKQGVNCLESQGQNTAGDFLLGMGICRGSAKNPQPAQAWLFSDHLIQQQGKCLAATSTLMSSPGSPVILQMCNPREGKQKWRRKGSFIQHSVSGLCLETKPAQLVTSKCQADAQAQQWQLLPHT.

The Cytoplasmic portion of the chain corresponds to 1-6 (MRKIRA). The chain crosses the membrane as a helical; Signal-anchor for type II membrane protein span at residues 7 to 26 (NAIAILTVAWILGTFYYLWQ). Residues 27–558 (DNRAHAASSG…AQQWQLLPHT (532 aa)) are Lumenal-facing. Residues 33-54 (ASSGGRGAQRAGRRSEQLREDR) are disordered. Residues 45-54 (RRSEQLREDR) show a composition bias toward basic and acidic residues. 5 disulfide bridges follow: C113-C340, C331-C409, C441-C460, C486-C506, and C530-C543. The tract at residues 122 to 227 (LPATSVIITF…TEWLPPMLQR (106 aa)) is catalytic subdomain A. 2 residues coordinate substrate: D163 and R188. Mn(2+) is bound at residue D211. Substrate is bound at residue S212. H213 is a Mn(2+) binding site. Residues 286-348 (PIRTPVIAGG…PCSRVGHVFR (63 aa)) form a catalytic subdomain B region. Position 317 (W317) interacts with substrate. H345 contributes to the Mn(2+) binding site. Substrate-binding residues include R348, H351, and Y353. One can recognise a Ricin B-type lectin domain in the interval 428 to 555 (KEALPGIIKQ…DAQAQQWQLL (128 aa)).

Belongs to the glycosyltransferase 2 family. GalNAc-T subfamily. Mn(2+) is required as a cofactor.

It is found in the golgi apparatus membrane. The catalysed reaction is L-seryl-[protein] + UDP-N-acetyl-alpha-D-galactosamine = a 3-O-[N-acetyl-alpha-D-galactosaminyl]-L-seryl-[protein] + UDP + H(+). It catalyses the reaction L-threonyl-[protein] + UDP-N-acetyl-alpha-D-galactosamine = a 3-O-[N-acetyl-alpha-D-galactosaminyl]-L-threonyl-[protein] + UDP + H(+). Its pathway is protein modification; protein glycosylation. Its function is as follows. Catalyzes the initial reaction in O-linked oligosaccharide biosynthesis, the transfer of an N-acetyl-D-galactosamine residue to a serine or threonine residue on the protein receptor. The chain is Polypeptide N-acetylgalactosaminyltransferase 16 (GALNT16) from Homo sapiens (Human).